The sequence spans 236 residues: UPF0502 protein BamMC406_5439 (236 aa).

This sequence belongs to the UPF0502 family.

This Burkholderia ambifaria (strain MC40-6) protein is UPF0502 protein BamMC406_5439.